Reading from the N-terminus, the 132-residue chain is Histone H2A.1 (132 aa).

This sequence belongs to the histone H2A family. The nucleosome is a histone octamer containing two molecules each of H2A, H2B, H3 and H4 assembled in one H3-H4 heterotetramer and two H2A-H2B heterodimers. The octamer wraps approximately 147 bp of DNA.

The protein localises to the nucleus. The protein resides in the chromosome. Functionally, core component of nucleosome. Nucleosomes wrap and compact DNA into chromatin, limiting DNA accessibility to the cellular machineries which require DNA as a template. Histones thereby play a central role in transcription regulation, DNA repair, DNA replication and chromosomal stability. DNA accessibility is regulated via a complex set of post-translational modifications of histones, also called histone code, and nucleosome remodeling. This Leishmania infantum protein is Histone H2A.1.